The chain runs to 91 residues: Sec-independent protein translocase protein TatA (91 aa).

Residues 1–21 form a helical membrane-spanning segment; that stretch reads MGAMSPWHWAIVALVVIILFG. Residues 44 to 91 are disordered; it reads KEMQNDNSTPAPTAQQSAPAELPVADTTTAPVTPPAPVQPQHTEPKSA. Residues 51-74 show a composition bias toward low complexity; the sequence is STPAPTAQQSAPAELPVADTTTAP.

It belongs to the TatA/E family. In terms of assembly, the Tat system comprises two distinct complexes: a TatABC complex, containing multiple copies of TatA, TatB and TatC subunits, and a separate TatA complex, containing only TatA subunits. Substrates initially bind to the TatABC complex, which probably triggers association of the separate TatA complex to form the active translocon.

It localises to the cell membrane. Functionally, part of the twin-arginine translocation (Tat) system that transports large folded proteins containing a characteristic twin-arginine motif in their signal peptide across membranes. TatA could form the protein-conducting channel of the Tat system. In Rhodococcus jostii (strain RHA1), this protein is Sec-independent protein translocase protein TatA.